We begin with the raw amino-acid sequence, 255 residues long: GTP cyclohydrolase III (255 aa).

This sequence belongs to the archaeal-type GTP cyclohydrolase family.

It carries out the reaction GTP + 3 H2O = 2-amino-5-formylamino-6-(5-phospho-D-ribosylamino)pyrimidin-4(3H)-one + 2 phosphate + 2 H(+). Catalyzes the formation of 2-amino-5-formylamino-6-ribofuranosylamino-4(3H)-pyrimidinone ribonucleotide monophosphate and inorganic phosphate from GTP. Also has an independent pyrophosphate phosphohydrolase activity. The sequence is that of GTP cyclohydrolase III from Methanosphaera stadtmanae (strain ATCC 43021 / DSM 3091 / JCM 11832 / MCB-3).